We begin with the raw amino-acid sequence, 366 residues long: uncharacterized protein (366 aa).

The disordered stretch occupies residues 199 to 267 (QKKQIEDEEK…QLKDAQAKRD (69 aa)).

This is an uncharacterized protein from Haemophilus influenzae (strain ATCC 51907 / DSM 11121 / KW20 / Rd).